A 379-amino-acid polypeptide reads, in one-letter code: S-adenosylmethionine:tRNA ribosyltransferase-isomerase (379 aa).

Residues 35 to 58 are disordered; that stretch reads AESRPHAESVPHAESRPHAESAFS.

It belongs to the QueA family. As to quaternary structure, monomer.

Its subcellular location is the cytoplasm. The enzyme catalyses 7-aminomethyl-7-carbaguanosine(34) in tRNA + S-adenosyl-L-methionine = epoxyqueuosine(34) in tRNA + adenine + L-methionine + 2 H(+). It participates in tRNA modification; tRNA-queuosine biosynthesis. Functionally, transfers and isomerizes the ribose moiety from AdoMet to the 7-aminomethyl group of 7-deazaguanine (preQ1-tRNA) to give epoxyqueuosine (oQ-tRNA). In Rhizobium leguminosarum bv. trifolii (strain WSM2304), this protein is S-adenosylmethionine:tRNA ribosyltransferase-isomerase.